The sequence spans 342 residues: MTVRVAINGFGRIGRNVVRALYESGRRAEITVVAINELADAAGMAHLLKYDTSHGRFAWEVRHEREQLFVGDDVIRILHEQTLADLPWRELGVDVVLDCTGVYGNREHGEAHIAAGAKKVLFSHPGSNDLDATVVFGVNQNQLRAEHRIVSNASCTTNCIIPVIKLLDDAYGIESGTVTTIHSAMNDQQVIDAYHPDLRRTRAASQSIIPVDTKLAAGITRIFPQFNDRFEAIAVRVPTINVTAIDLSVTVKKPIKASEVNQLLQKAAQGAFHGIVDYTESPLVSIDFNHDPHSAIVDGTQTRVSGAHLIKTLVWCDNEWGFANRMLDTTLAMAAVGFRLDT.

12-13 (RI) provides a ligand contact to NAD(+). Substrate is bound by residues 154–156 (SCT), arginine 200, 213–214 (TK), and arginine 236. The active-site Nucleophile is cysteine 155. Residue asparagine 318 participates in NAD(+) binding.

This sequence belongs to the glyceraldehyde-3-phosphate dehydrogenase family. Epd subfamily. Homotetramer.

It localises to the cytoplasm. The catalysed reaction is D-erythrose 4-phosphate + NAD(+) + H2O = 4-phospho-D-erythronate + NADH + 2 H(+). The protein operates within cofactor biosynthesis; pyridoxine 5'-phosphate biosynthesis; pyridoxine 5'-phosphate from D-erythrose 4-phosphate: step 1/5. In terms of biological role, catalyzes the NAD-dependent conversion of D-erythrose 4-phosphate to 4-phosphoerythronate. This is D-erythrose-4-phosphate dehydrogenase from Salmonella arizonae (strain ATCC BAA-731 / CDC346-86 / RSK2980).